A 246-amino-acid polypeptide reads, in one-letter code: Probable transcriptional regulatory protein APP7_1210 (246 aa).

This sequence belongs to the TACO1 family.

It localises to the cytoplasm. In Actinobacillus pleuropneumoniae serotype 7 (strain AP76), this protein is Probable transcriptional regulatory protein APP7_1210.